Reading from the N-terminus, the 98-residue chain is uncharacterized protein (98 aa).

Belongs to the IS150/IS1296 orfA family.

This is an uncharacterized protein from Haemophilus influenzae (strain ATCC 51907 / DSM 11121 / KW20 / Rd).